We begin with the raw amino-acid sequence, 313 residues long: FAM172 family protein homolog Y75B8A.31 (313 aa).

The segment at 293 to 313 is disordered; sequence VKSENSKESDDEAPKSKKICV. The span at 296–307 shows a compositional bias: basic and acidic residues; that stretch reads ENSKESDDEAPK.

The protein belongs to the FAM172 family.

The chain is FAM172 family protein homolog Y75B8A.31 from Caenorhabditis elegans.